Reading from the N-terminus, the 390-residue chain is Mannitol-1-phosphate 5-dehydrogenase (390 aa).

7–18 (AVHFGGGNIGRG) contacts NAD(+). The active site involves K216.

It belongs to the mannitol dehydrogenase family. Monomer.

It carries out the reaction D-mannitol 1-phosphate + NAD(+) = beta-D-fructose 6-phosphate + NADH + H(+). Catalyzes the NAD(H)-dependent interconversion of D-fructose 6-phosphate and D-mannitol 1-phosphate in the mannitol metabolic pathway. Has a strong preference for NADH over NADPH. This is Mannitol-1-phosphate 5-dehydrogenase from Alternaria alternata (Alternaria rot fungus).